The sequence spans 189 residues: Apolipoprotein D (189 aa).

The N-terminal stretch at 1 to 20 (MVMLLLLLSALAGLFGAAEG) is a signal peptide. Position 21 is a pyrrolidone carboxylic acid (Q21). Disulfide bonds link C28-C134 and C61-C185. Residues N65 and N98 are each glycosylated (N-linked (GlcNAc...) asparagine).

It belongs to the calycin superfamily. Lipocalin family. In terms of assembly, homodimer.

The protein localises to the secreted. APOD occurs in the macromolecular complex with lecithin-cholesterol acyltransferase. It is probably involved in the transport and binding of bilin. Appears to be able to transport a variety of ligands in a number of different contexts. The polypeptide is Apolipoprotein D (APOD) (Macaca fascicularis (Crab-eating macaque)).